The chain runs to 251 residues: MRFDIVTLFPEMVRDAARYGVTGRALAAGKVSLEVWNPRDFTRDRHRTVDDRPYGGGPGMVMKVEPLRDAIRAAKGQATPGARVVLMSPQGTRLDQAAVRRFAAAPGLILVAGRYEGVDERLIETEIDEEWSIGDYVLSGGELPALVVFDAVVRLLPGVLGDAESAEQDSHAEGLLDHPHYTRPERVAGRDVPAVLQSGNHAAIGRWRLKQALGKTWLKRPDLLACRVMTPEQLELLDEFKREFELQKNRG.

Residues Gly113 and 133–138 (IGDYVL) contribute to the S-adenosyl-L-methionine site.

The protein belongs to the RNA methyltransferase TrmD family. Homodimer.

It is found in the cytoplasm. It carries out the reaction guanosine(37) in tRNA + S-adenosyl-L-methionine = N(1)-methylguanosine(37) in tRNA + S-adenosyl-L-homocysteine + H(+). Functionally, specifically methylates guanosine-37 in various tRNAs. This is tRNA (guanine-N(1)-)-methyltransferase from Methylococcus capsulatus (strain ATCC 33009 / NCIMB 11132 / Bath).